Reading from the N-terminus, the 196-residue chain is Charged multivesicular body protein 1a (196 aa).

Methionine 1 is modified (N-acetylmethionine). Residues leucine 5–valine 47 adopt a coiled-coil conformation. A Phosphoserine modification is found at serine 101. Residues threonine 102 to valine 124 adopt a coiled-coil conformation. Position 173 is a phosphoserine (serine 173). A disordered region spans residues serine 173–asparagine 196. Positions aspartate 185 to arginine 195 match the MIT-interacting motif motif.

Belongs to the SNF7 family. As to quaternary structure, probable peripherally associated component of the endosomal sorting required for transport complex III (ESCRT-III). ESCRT-III components are thought to multimerize to form a flat lattice on the perimeter membrane of the endosome. Several assembly forms of ESCRT-III may exist that interact and act sequentially. Self-associates. Interacts with CHMP1B. Interacts with VPS4A. Interacts with VPS4B. Interacts with PHF1. Interacts with IST1. Interacts with MITD1. In terms of tissue distribution, expressed in placenta, cultured skin fibroblasts and in osteoblast cell line MG-63.

The protein localises to the cytoplasm. Its subcellular location is the endosome membrane. It is found in the nucleus matrix. In terms of biological role, probable peripherally associated component of the endosomal sorting required for transport complex III (ESCRT-III) which is involved in multivesicular bodies (MVBs) formation and sorting of endosomal cargo proteins into MVBs. MVBs contain intraluminal vesicles (ILVs) that are generated by invagination and scission from the limiting membrane of the endosome and mostly are delivered to lysosomes enabling degradation of membrane proteins, such as stimulated growth factor receptors, lysosomal enzymes and lipids. The MVB pathway appears to require the sequential function of ESCRT-O, -I,-II and -III complexes. ESCRT-III proteins mostly dissociate from the invaginating membrane before the ILV is released. The ESCRT machinery also functions in topologically equivalent membrane fission events, such as the terminal stages of cytokinesis and the budding of enveloped viruses (HIV-1 and other lentiviruses). ESCRT-III proteins are believed to mediate the necessary vesicle extrusion and/or membrane fission activities, possibly in conjunction with the AAA ATPase VPS4. Involved in cytokinesis. Involved in recruiting VPS4A and/or VPS4B to the midbody of dividing cells. May also be involved in chromosome condensation. Targets the Polycomb group (PcG) protein BMI1/PCGF4 to regions of condensed chromatin. May play a role in stable cell cycle progression and in PcG gene silencing. The sequence is that of Charged multivesicular body protein 1a (CHMP1A) from Homo sapiens (Human).